Consider the following 737-residue polypeptide: Phosphoribosylformylglycinamidine synthase subunit PurL (737 aa).

His-50 is a catalytic residue. 2 residues coordinate ATP: Tyr-53 and Lys-92. Glu-94 lines the Mg(2+) pocket. Substrate-binding positions include 95-98 and Arg-117; that span reads SHNH. His-96 (proton acceptor) is an active-site residue. Asp-118 is a Mg(2+) binding site. Gln-241 contributes to the substrate binding site. Asp-269 provides a ligand contact to Mg(2+). Residue 313-315 participates in substrate binding; sequence ESQ. The ATP site is built by Asp-494 and Gly-531. Residue Asn-532 coordinates Mg(2+). Ser-534 is a binding site for substrate.

It belongs to the FGAMS family. As to quaternary structure, monomer. Part of the FGAM synthase complex composed of 1 PurL, 1 PurQ and 2 PurS subunits.

The protein resides in the cytoplasm. It catalyses the reaction N(2)-formyl-N(1)-(5-phospho-beta-D-ribosyl)glycinamide + L-glutamine + ATP + H2O = 2-formamido-N(1)-(5-O-phospho-beta-D-ribosyl)acetamidine + L-glutamate + ADP + phosphate + H(+). Its pathway is purine metabolism; IMP biosynthesis via de novo pathway; 5-amino-1-(5-phospho-D-ribosyl)imidazole from N(2)-formyl-N(1)-(5-phospho-D-ribosyl)glycinamide: step 1/2. Functionally, part of the phosphoribosylformylglycinamidine synthase complex involved in the purines biosynthetic pathway. Catalyzes the ATP-dependent conversion of formylglycinamide ribonucleotide (FGAR) and glutamine to yield formylglycinamidine ribonucleotide (FGAM) and glutamate. The FGAM synthase complex is composed of three subunits. PurQ produces an ammonia molecule by converting glutamine to glutamate. PurL transfers the ammonia molecule to FGAR to form FGAM in an ATP-dependent manner. PurS interacts with PurQ and PurL and is thought to assist in the transfer of the ammonia molecule from PurQ to PurL. The chain is Phosphoribosylformylglycinamidine synthase subunit PurL from Rhodopseudomonas palustris (strain BisA53).